The primary structure comprises 104 residues: Ribonucleotide reductase inhibitor protein SML1 (104 aa).

Met1 bears the N-acetylmethionine mark. The tract at residues 43–62 (PMLSTQNSMGSSASASASSL) is disordered. Ser56, Ser58, and Ser60 each carry phosphoserine; by DUN1.

In terms of assembly, homodimer; disulfide-linked. Interacts with RNR1. Post-translationally, phosphorylated by DUN1, a downstream effector of the Mec1/Rad53 checkpoint pathway, in response to DNA damage. This promotes ubiquitination of SML1 and targets it for degradation by the 26S proteasome.

It localises to the nucleus. The protein localises to the cytoplasm. Strong inhibitor of ribonucleotide reductase (RNR1) and is involved in regulating dNTP production. This chain is Ribonucleotide reductase inhibitor protein SML1 (SML1), found in Saccharomyces cerevisiae (strain ATCC 204508 / S288c) (Baker's yeast).